The sequence spans 376 residues: General transcription factor IIH subunit 2 (376 aa).

The 143-residue stretch at 64–206 (HVMIVIDCSR…NIRCSAIGLS (143 aa)) folds into the VWFA domain. The C4-type zinc finger occupies 286 to 303 (CTQCGARHCSIPAECPVC).

The protein belongs to the GTF2H2 family. Component of the 7-subunit TFIIH core complex composed of xpb-1, xpd-1, gtf-2H1, gtf-2H2C, gtf-2H3, Y73F8A.24 and gtf-2H5, which is active in NER. The core complex associates with the 3-subunit CDK-activating kinase (CAK) module composed of cyh-1, cdk-7 and mnat-1 to form the 10-subunit holoenzyme (holo-TFIIH) active in transcription.

The protein localises to the nucleus. Its function is as follows. Component of the general transcription and DNA repair factor IIH (TFIIH) core complex, which is involved in general and transcription-coupled nucleotide excision repair (NER) of damaged DNA and, when complexed to CAK, in RNA transcription by RNA polymerase II. In NER, TFIIH acts by opening DNA around the lesion to allow the excision of the damaged oligonucleotide and its replacement by a new DNA fragment. In transcription, TFIIH has an essential role in transcription initiation. When the pre-initiation complex (PIC) has been established, TFIIH is required for promoter opening and promoter escape. Phosphorylation of the C-terminal tail (CTD) of the largest subunit of RNA polymerase II by the kinase module CAK controls the initiation of transcription. The sequence is that of General transcription factor IIH subunit 2 from Caenorhabditis elegans.